Consider the following 305-residue polypeptide: GTP cyclohydrolase FolE2 (305 aa).

Belongs to the GTP cyclohydrolase IV family.

It carries out the reaction GTP + H2O = 7,8-dihydroneopterin 3'-triphosphate + formate + H(+). The protein operates within cofactor biosynthesis; 7,8-dihydroneopterin triphosphate biosynthesis; 7,8-dihydroneopterin triphosphate from GTP: step 1/1. In terms of biological role, converts GTP to 7,8-dihydroneopterin triphosphate. This Xanthomonas axonopodis pv. citri (strain 306) protein is GTP cyclohydrolase FolE2.